We begin with the raw amino-acid sequence, 112 residues long: Nucleoid-associated protein lpp2803 (112 aa).

Belongs to the YbaB/EbfC family. Homodimer.

The protein resides in the cytoplasm. It is found in the nucleoid. Binds to DNA and alters its conformation. May be involved in regulation of gene expression, nucleoid organization and DNA protection. In Legionella pneumophila (strain Paris), this protein is Nucleoid-associated protein lpp2803.